A 1681-amino-acid chain; its full sequence is Meiosis regulator and mRNA stability factor 1 (1681 aa).

The region spanning 340–477 (IGVFWDIENC…ALLHHAHELI (138 aa)) is the NYN domain. 2 disordered regions span residues 576-595 (VNET…PKKV) and 638-717 (QMQS…DVVF). A compositionally biased stretch (polar residues) spans 638–647 (QMQSKSNKTS). Residues 648-658 (QQEKDKKRNGD) show a composition bias toward basic and acidic residues. The segment covering 659–690 (KQGTLSQSSPLCTNQMLQTARNVGTDNTASKS) has biased composition (polar residues). Over residues 692–715 (QKRDDTTRKSNADSQKEQKNKEDV) the composition is skewed to basic and acidic residues. Residues 779 to 858 (ADIQIGNLDY…KRIQVSLATG (80 aa)) form the RRM domain. 8 consecutive HTH OST-type domains span residues 863-937 (SLSL…SPMG), 991-1067 (SLKT…HNKP), 1087-1161 (QLIQ…LTHR), 1163-1238 (QVKR…IPKR), 1247-1321 (RTKQ…LTEM), 1323-1398 (RIKA…INRK), 1399-1472 (SLRS…SVQL), and 1474-1548 (SLYV…LKND). The segment covering 1637–1648 (EPSTQNICPQES) has biased composition (polar residues). Residues 1637-1662 (EPSTQNICPQESKSTKELPESPVKRQ) are disordered. Over residues 1649–1659 (KSTKELPESPV) the composition is skewed to basic and acidic residues.

It localises to the peroxisome. Essential regulator of oogenesis required for female meiotic progression to repress transposable elements and preventing their mobilization, which is essential for the germline integrity. This chain is Meiosis regulator and mRNA stability factor 1, found in Xenopus tropicalis (Western clawed frog).